Here is a 462-residue protein sequence, read N- to C-terminus: Sonic hedgehog protein (462 aa).

The first 23 residues, 1 to 23 (MLLLARCLLLVLVSSLLVCSGLA), serve as a signal peptide directing secretion. A lipid anchor (N-palmitoyl cysteine) is attached at cysteine 24. Residues 32-38 (KRRHPKK) carry the Cardin-Weintraub motif. Ca(2+) contacts are provided by glutamate 89, glutamate 90, aspartate 95, threonine 125, glutamate 126, aspartate 129, and aspartate 131. 3 residues coordinate Zn(2+): histidine 140, aspartate 147, and histidine 182. Glycine 197 is lipidated: Cholesterol glycine ester. Residue asparagine 278 is glycosylated (N-linked (GlcNAc...) asparagine). Disordered regions lie at residues 279–302 (DSATGEPEASSGSGPPSGGALGPR) and 395–414 (TDRGGDSGGGDRGGGGGRVA). Positions 283–292 (GEPEASSGSG) are enriched in low complexity. A compositionally biased stretch (gly residues) spans 400 to 412 (DSGGGDRGGGGGR).

It belongs to the hedgehog family. As to quaternary structure, multimer. In terms of assembly, interacts with HHATL/GUP1 which negatively regulates HHAT-mediated palmitoylation of the SHH N-terminus. Interacts with BOC and CDON. Interacts with HHIP. Interacts with DISP1 via its cholesterol anchor. Interacts with SCUBE2. Interacts with glypican GPC3. The C-terminal domain displays an autoproteolysis activity and a cholesterol transferase activity. Both activities result in the cleavage of the full-length protein and covalent attachment of a cholesterol moiety to the C-terminal of the newly generated N-terminal fragment (ShhN). Cholesterylation is required for the sonic hedgehog protein N-product targeting to lipid rafts and multimerization. ShhN is the active species in both local and long-range signaling, whereas the C-product (ShhC) is degraded in the endoplasmic reticulum. Post-translationally, N-palmitoylation by HHAT of ShhN is required for sonic hedgehog protein N-product multimerization and full activity. It is a prerequisite for the membrane-proximal positioning and the subsequent shedding of this N-terminal peptide. In terms of processing, the lipidated N- and C-terminal peptides of ShhNp can be cleaved (shedding). The N-terminal palmitoylated peptide is cleaved at the Cardin-Weintraub (CW) motif site. The cleavage reduced the interactions with heparan sulfate. The cleavage is enhanced by SCUBE2.

Its subcellular location is the endoplasmic reticulum membrane. It is found in the golgi apparatus membrane. It localises to the secreted. The protein resides in the cell membrane. It carries out the reaction glycyl-L-cysteinyl-[protein] + cholesterol + H(+) = [protein]-C-terminal glycyl cholesterol ester + N-terminal L-cysteinyl-[protein]. Functionally, the C-terminal part of the sonic hedgehog protein precursor displays an autoproteolysis and a cholesterol transferase activity. Both activities result in the cleavage of the full-length protein into two parts (ShhN and ShhC) followed by the covalent attachment of a cholesterol moiety to the C-terminal of the newly generated ShhN. Both activities occur in the endoplasmic reticulum. Once cleaved, ShhC is degraded in the endoplasmic reticulum. The dually lipidated sonic hedgehog protein N-product (ShhNp) is a morphogen which is essential for a variety of patterning events during development. Induces ventral cell fate in the neural tube and somites. Involved in the patterning of the anterior-posterior axis of the developing limb bud. Essential for axon guidance. Binds to the patched (PTCH1) receptor, which functions in association with smoothened (SMO), to activate the transcription of target genes. In the absence of SHH, PTCH1 represses the constitutive signaling activity of SMO. This is Sonic hedgehog protein from Homo sapiens (Human).